The chain runs to 181 residues: MMQPLYLVGPRGCGKTTIGMALAQATGFRFADTDRWLQSHVQMSVADIVEKEGWGGFRARETAALEAVSAPSTVVATGGGIILTDYNRRYMHRVGVVIYLCAPVSTLVNRLEAEPEADLRPTLTGKPLSEEVREVLEQRDALYRETAHYIIDATKAPAQVVSEIIAALPPSTQRLQGDVYT.

12-17 (GCGKTT) is a binding site for ATP. Positions 16 and 32 each coordinate Mg(2+). Substrate-binding residues include Asp-34, Arg-58, and Gly-79. The segment at 112-126 (EAEPEADLRPTLTGK) is LID domain. Arg-120 is a binding site for ATP. Arg-139 contributes to the substrate binding site.

Belongs to the shikimate kinase family. AroL subfamily. In terms of assembly, monomer. Requires Mg(2+) as cofactor.

It localises to the cytoplasm. It carries out the reaction shikimate + ATP = 3-phosphoshikimate + ADP + H(+). The protein operates within metabolic intermediate biosynthesis; chorismate biosynthesis; chorismate from D-erythrose 4-phosphate and phosphoenolpyruvate: step 5/7. Functionally, catalyzes the specific phosphorylation of the 3-hydroxyl group of shikimic acid using ATP as a cosubstrate. The sequence is that of Shikimate kinase 2 from Salmonella dublin (strain CT_02021853).